Reading from the N-terminus, the 1141-residue chain is Envelopment polyprotein (1141 aa).

Residues 1–18 (MGRLYLIVLGVLITATAG) form the signal peptide. The Lumenal portion of the chain corresponds to 19 to 483 (FPRSVHELKI…HSLAVELCVP (465 aa)). 10 cysteine pairs are disulfide-bonded: Cys30–Cys158, Cys64–Cys164, Cys113–Cys135, Cys140–Cys145, Cys182–Cys192, Cys217–Cys253, Cys242–Cys357, Cys382–Cys441, Cys386–Cys395, and Cys458–Cys481. Asn141 carries an N-linked (GlcNAc...) asparagine; by host glycan. Asn353 carries N-linked (GlcNAc...) asparagine; by host glycosylation. Asn405 carries N-linked (GlcNAc...) asparagine; by host glycosylation. The chain crosses the membrane as a helical span at residues 484 to 506 (GIHGWATIALVITFCFGWLLIPT). Over 507–633 (TTMVVLKCLR…LGVFRYKSRC (127 aa)) the chain is Cytoplasmic. Positions 522–539 (CSHYSTESKFKVILEKVK) are binding to the ribonucleoprotein. 2 consecutive CCHC-type zinc fingers follow at residues 551-571 (CDIC…KKSC) and 576-597 (CPYC…YAVC). Binding to the ribonucleoprotein regions lie at residues 594 to 611 (YAVC…KKSL), 598 to 609 (KLTGRFHEALKK), and 617 to 631 (QRGC…RYKS). The ITAM domain occupies 617–640 (QRGCYRTLGVFRYKSRCYVGLVWM). Phosphotyrosine occurs at positions 621 and 634. Positions 621 to 624 (YRTL) match the YxxL motif. The helical transmembrane segment at 634–654 (YVGLVWMCLLTLELIVWAASA) threads the bilayer. The Lumenal portion of the chain corresponds to 655-1110 (DTPLLEPGWS…EWLLGILNGN (456 aa)). Cystine bridges form between Cys741–Cys776, Cys745–Cys783, Cys757–Cys890, Cys771–Cys901, Cys786–Cys909, Cys812–Cys821, Cys829–Cys838, and Cys869–Cys873. The tract at residues 763–783 (YQYETSWSCNPPDCPGVGTGC) is fusion loop. Asn933 carries an N-linked (GlcNAc...) asparagine; by host glycan. 5 disulfide bridges follow: Cys975–Cys1005, Cys998–Cys1050, Cys1015–Cys1020, Cys1051–Cys1056, and Cys1090–Cys1094. A helical transmembrane segment spans residues 1111-1131 (WVVVAVLVIILLISIFLFSFF). The binding to the ribonucleoprotein stretch occupies residues 1127–1141 (LFSFFCPIRSHKKQL). At 1132–1141 (CPIRSHKKQL) the chain is on the cytoplasmic side.

It belongs to the hantavirus envelope glycoprotein family. Homodimer. Homotetramer; forms heterotetrameric Gn-Gc spikes in the pre-fusion conformation. Interacts (via C-terminus) with the nucleoprotein. Interacts with host TUFM; this interaction contributes to the virus-induced degradation of mitochondria by autophagy, which leads to degradation of host MAVS and inhibition of type I interferon (IFN) responses. Interacts with host MAP1LC3B; this interaction contributes to the virus-induced degradation of mitochondria by autophagy, which leads to degradation of host MAVS and inhibition of type I interferon (IFN) responses. In terms of assembly, homodimer. Homotetramer; forms heterotetrameric Gn-Gc spikes in the pre-fusion conformation. Homotrimer; forms homotrimer in the post-fusion conformation at acidic pH. Interacts (via C-terminus) with the nucleoprotein. Envelope polyprotein precursor is quickly cleaved in vivo just after synthesis, presumably by host signal peptidase.

The protein localises to the virion membrane. It localises to the host cell surface. Its subcellular location is the host Golgi apparatus membrane. The protein resides in the host endoplasmic reticulum membrane. It is found in the host mitochondrion. In terms of biological role, forms homotetramers with glycoprotein C at the surface of the virion. Attaches the virion to host cell receptors including integrin ITGAV/ITGB3. This attachment induces virion internalization predominantly through clathrin-dependent endocytosis. Mediates the assembly and budding of infectious virus particles through its interaction with the nucleocapsid protein and the viral genome. May dysregulate normal immune and endothelial cell responses through an ITAM motif. Translocates to mitochondria, binds to host TUFM and recruits MAP1LC3B. These interactions induce mitochondrial autophagy and therefore destruction of host MAVS leading to inhibition of type I interferon (IFN) responses. Concomitant breakdown of glycoprotein N is apparently prevented by the nucleoprotein that may inhibit Gn-stimulated autophagosome-lysosome fusion. Interacts with the viral genomic RNA. Its function is as follows. Forms homotetramers with glycoprotein N at the surface of the virion. Attaches the virion to host cell receptors including integrin ITGAV/ITGB3. This attachment induces virion internalization predominantly through clathrin-dependent endocytosis. Class II fusion protein that promotes fusion of viral membrane with host endosomal membrane after endocytosis of the virion. The polypeptide is Envelopment polyprotein (GP) (Homo sapiens (Human)).